A 684-amino-acid polypeptide reads, in one-letter code: Phenoloxidase 2 (684 aa).

The propeptide at 1-51 is removed by PPAF1; that stretch reads MSNTAVLNDLVALYDRPTEPMFRVKAKKSFKVPKEYVTDRFKNVAVEISNR. N-linked (GlcNAc...) asparagine glycosylation is found at Asn81 and Asn91. The Cu cation site is built by His209, His213, and His238. Residue Asn330 is glycosylated (N-linked (GlcNAc...) asparagine). Glu350 serves as the catalytic Proton acceptor. Positions 365, 369, and 405 each coordinate Cu cation. Residues Asn416, Asn487, Asn491, and Asn546 are each glycosylated (N-linked (GlcNAc...) asparagine). Intrachain disulfides connect Cys581/Cys623 and Cys583/Cys630.

Belongs to the tyrosinase family. As to quaternary structure, dimer. Might form a homodimer or a heterodimer with PPO1. Might interact with PPAF2 (via CLIP domain); the interaction might be required for PPO2 activity. Cu(2+) is required as a cofactor. In terms of processing, precursor cleaved by PPAF1. Hemocytes.

Its subcellular location is the secreted. In terms of biological role, this is a copper-containing oxidase that functions in the formation of pigments such as melanins and other polyphenolic compounds. Catalyzes the oxidation of o-diphenols (N-acetyldopamine, 4-methylcatechol and dopamine). Cannot oxidize monophenols and p-phenols (L-tyrosine, tyramine, gentisic acid and hydroquinone). Binds to the surface of hemocytes and is involved in hemocyte melanization. Activation of the enzyme in response to bacterial lipopolysaccharides (LPS) suggests it may play a role in innate immunity. This Holotrichia diomphalia (Korean black chafer) protein is Phenoloxidase 2.